We begin with the raw amino-acid sequence, 415 residues long: Branched-chain-amino-acid aminotransferase 5, chloroplastic (415 aa).

The transit peptide at M1–R65 directs the protein to the chloroplast. K261 carries the N6-(pyridoxal phosphate)lysine modification.

This sequence belongs to the class-IV pyridoxal-phosphate-dependent aminotransferase family. Pyridoxal 5'-phosphate is required as a cofactor.

It localises to the plastid. The protein localises to the chloroplast. It carries out the reaction L-leucine + 2-oxoglutarate = 4-methyl-2-oxopentanoate + L-glutamate. The catalysed reaction is L-isoleucine + 2-oxoglutarate = (S)-3-methyl-2-oxopentanoate + L-glutamate. It catalyses the reaction L-valine + 2-oxoglutarate = 3-methyl-2-oxobutanoate + L-glutamate. The protein operates within amino-acid biosynthesis; L-isoleucine biosynthesis; L-isoleucine from 2-oxobutanoate: step 4/4. It participates in amino-acid biosynthesis; L-leucine biosynthesis; L-leucine from 3-methyl-2-oxobutanoate: step 4/4. It functions in the pathway amino-acid biosynthesis; L-valine biosynthesis; L-valine from pyruvate: step 4/4. Its function is as follows. Converts 2-oxo acids to branched-chain amino acids. Acts on leucine, isoleucine and valine. The polypeptide is Branched-chain-amino-acid aminotransferase 5, chloroplastic (BCAT5) (Arabidopsis thaliana (Mouse-ear cress)).